A 2220-amino-acid chain; its full sequence is MIRIAALNASSTIEDDHEGSFKSHKTQTKEAQEAEAFALYHKALDLQKHDRFEESAKAYHELLEASLLREAVSSGDEKEGLKHPGLILKYSTYKNLAQLAAQREDLETAMEFYLEAVMLDSTDVNLWYKIGHVALRLIRIPLARHAFEEGLRCNPDHWPCLDNLITVLYTLSDYTTCLYFICKALEKDCRYSKGLVLKEKIFEEQPCLRKDSLRMFLKCDMSIHDVSVSAAETQAIVDEALGLRKKRQALIVREKEPDLKLVQPIPFFTWKCLGESLLAMYNHLTTCEPPRPSLGKRIDLSDYQDPSQPLESSMVVTPVNVIQPSTVSTNPAVAVAEPVVSYTSVATTSFPLHSPGLLETGAPVGDISGGDKSKKGVKRKKISEESGETAKRRSARVRNTKCKKEEKVDFQELLMKFLPSRLRKLDPEEEDDSFNNYEVQSEAKLESFPSIGPQRLSFDSATFMESEKQDVHEFLLENLTNGGILELMMRYLKAMGHKFLVRWPPGLAEVVLSVYHSWRRHSTSLPNPLLRDCSNKHIKDMMLMSLSCMELQLDQWLLTKGRSSAVSPRNCPAGMVNGRFGPDFPGTHCLGDLLQLSFASSQRDLFEDGWLEFVVRVYWLKARFLALQGDMEQALENYDICTEMLQSSTAIQVEAGAERRDIVIRLPNLHNDSVVSLEEIDKNLKSLERCQSLEEIQRLYEAGDYKAVVHLLRPTLCTSGFDRAKHLEFMTSIPERPAQLLLLQDSLLRLKDYRQCFECSDVALNEAVQQMVNSGEAAAKEEWVATVTQLLMGIEQALSADSSGSILKVSSSTTGLVRLTNNLIQVIDCSMAVQEEAKEPHVSSVLPWIILHRIIWQEEDTFHSLCHQQQLQNPAEEGMSETPMLPSSLMLLNTAHEYLGRRSWCCNSDGALLRFYVRVLQKELAASTSEDTHPYKEELETALEQCFYCLYSFPSKKSKARYLEEHSAQQVDLIWEDALFMFEYFKPKTLPEFDSYKTSTVSADLANLLKRIATIVPRTERPALSLDKVSAYIEGTSTEVPCLPEGADPSPPVVNELYYLLADYHFKNKEQSKAIKFYMHDICICPNRFDSWAGMALARASRIQDKLNSNELKSDGPIWKHATPVLNCFRRALEIDSSNLSLWIEYGTMSYALHSFASRQLKQWRGELPPELVQQMEGRRDSMLETAKHCFTSAARCEGDGDEEEWLIHYMLGKVAEKQQQPPTVYLLHYRQAGHYLHEEAARYPKKIHYHNPPELAMEALEVYFRLHASILKLLGKPDSGVGAEVLVNFMKEAAEGPFARGEEKNTPKASEKEKACLVDEDSHSSAGTLPGPGASLPSSSGPGLTSPPYTATPIDHDYVKCKKPHQQATPDDRSQDSTAVALSDSSSTQDFFNEPTSLLEGSRKSYTEKRLPILSSQAGATGKDLQGATEERGKNEESLESTEGFRAAEQGVQKPAAETPASACIPGKPSASTPTLWDGKKRGDLPGEPVAFPQGLPAGAEEQRQFLTEQCIASFRLCLSRFPQHYKSLYRLAFLYTYSKTHRNLQWARDVLLGSSIPWQQLQHMPAQGLFCERNKTNFFNGIWRIPVDEIDRPGSFAWHMNRSIVLLLKVLAQLRDHSTLLKVSSMLQRTPDQGKKYLRDADRQVLAQRAFILTVKVLEDTLSELAEGSERPGPKVCGLPGARMTTDVSHKASPEDGQEGLPQPKKPPLADGSGPGPEPGGKVGLLNHRPVAMDAGDSADQSGERKDKESPRAGPTEPMDTSEATVCHSDLERTPPLLPGRPARDRGPESRPTELSLEELSISARQQPTPLTPAQPAPAPAPATTTGTRAGGHPEEPLSRLSRKRKLLEDTESGKTLLLDAYRVWQQGQKGVAYDLGRVERIMSETYMLIKQVDEEAALEQAVKFCQVHLGAAAQRQASGDTPTTPKHPKDSRENFFPVTVVPTAPDPVPADSVQRPSDAHTKPRPALAAATTIITCPPSASASTLDQSKDPGPPRPHRPEATPSMASLGPEGEELARVAEGTSFPPQEPRHSPQVKMAPTSSPAEPHCWPAEAALGTGAEPTCSQEGKLRPEPRRDGEAQEAASETQPLSSPPTAASSKAPSSGSAQPPEGHPGKPEPSRAKSRPLPNMPKLVIPSAATKFPPEITVTPPTPTLLSPKGSISEETKQKLKSAILSAQSAANVRKESLCQPALEVLETSSQESSLESETDEDDDYMDI.

2 positions are modified to phosphoserine: Ser-10 and Ser-11. Position 12 is a phosphothreonine (Thr-12). Ser-20 and Ser-66 each carry phosphoserine. TPR repeat units lie at residues 36-69, 90-123, and 125-157; these read AFAL…SLLR, YSTY…DSTD, and NLWY…NPDH. A disordered region spans residues 361 to 400; the sequence is GAPVGDISGGDKSKKGVKRKKISEESGETAKRRSARVRNT. Basic and acidic residues predominate over residues 382–391; it reads ISEESGETAK. Residues Ser-433 and Ser-450 each carry the phosphoserine modification. The TPR 4 repeat unit spans residues 615–648; it reads VRVYWLKARFLALQGDMEQALENYDICTEMLQSS. Residue Ser-673 is modified to Phosphoserine. 2 TPR repeats span residues 1055 to 1088 and 1106 to 1139; these read NELY…CPNR and KLNS…DSSN. 4 disordered regions span residues 1299–1476, 1668–1845, 1916–2165, and 2197–2220; these read FARG…STPT, AEGS…RLSR, AQRQ…GSIS, and VLET…YMDI. A compositionally biased stretch (basic and acidic residues) spans 1301-1324; it reads RGEEKNTPKASEKEKACLVDEDSH. Low complexity predominate over residues 1327–1349; the sequence is AGTLPGPGASLPSSSGPGLTSPP. Polar residues predominate over residues 1377–1397; that stretch reads DSTAVALSDSSSTQDFFNEPT. Residues 1402–1412 are compositionally biased toward basic and acidic residues; sequence GSRKSYTEKRL. Position 1439 is a phosphoserine (Ser-1439). A compositionally biased stretch (gly residues) spans 1715–1725; that stretch reads SGPGPEPGGKV. Composition is skewed to basic and acidic residues over residues 1744–1753 and 1784–1794; these read SGERKDKESP and PARDRGPESRP. The span at 1812–1823 shows a compositional bias: pro residues; sequence PLTPAQPAPAPA. Composition is skewed to polar residues over residues 1918–1927 and 1975–1989; these read RQASGDTPTT and TIIT…STLD. Position 1924 is a phosphothreonine (Thr-1924). Basic and acidic residues predominate over residues 2070-2081; that stretch reads GKLRPEPRRDGE. The segment covering 2091–2112 has biased composition (low complexity); it reads PLSSPPTAASSKAPSSGSAQPP. Ser-2094 carries the phosphoserine modification. The tract at residues 2116 to 2153 is required for interaction with calcineurin; the sequence is PGKPEPSRAKSRPLPNMPKLVIPSAATKFPPEITVTPP. A phosphothreonine mark is found at Thr-2151 and Thr-2154. Positions 2207 to 2220 are enriched in acidic residues; it reads LESETDEDDDYMDI.

Component of a complex that includes at least ASF1A, CABIN1, HIRA, histone H3.3 and UBN1. Interacts with calcineurin. Interacts with MEF2B. Activated through PKC-mediated hyperphosphorylation. Phosphorylation by the DNA damage kinases ATM and CHK2 enhances ubiquitination. In terms of processing, upon genotoxic stress, ubiquitination by the DCX(DDB2) E3 ubiquitin-protein ligase complex targets CABIN1 for proteasomal degradation, leading to the release of p53/TP53. In terms of tissue distribution, widely expressed in different tissues.

The protein resides in the nucleus. May be required for replication-independent chromatin assembly. May serve as a negative regulator of T-cell receptor (TCR) signaling via inhibition of calcineurin. Inhibition of activated calcineurin is dependent on both PKC and calcium signals. Acts as a negative regulator of p53/TP53 by keeping p53 in an inactive state on chromatin at promoters of a subset of it's target genes. This Homo sapiens (Human) protein is Calcineurin-binding protein cabin-1 (CABIN1).